Here is a 376-residue protein sequence, read N- to C-terminus: Anhydro-N-acetylmuramic acid kinase (376 aa).

An ATP-binding site is contributed by 16-23 (GTSMDGVD).

The protein belongs to the anhydro-N-acetylmuramic acid kinase family.

The enzyme catalyses 1,6-anhydro-N-acetyl-beta-muramate + ATP + H2O = N-acetyl-D-muramate 6-phosphate + ADP + H(+). Its pathway is amino-sugar metabolism; 1,6-anhydro-N-acetylmuramate degradation. It participates in cell wall biogenesis; peptidoglycan recycling. In terms of biological role, catalyzes the specific phosphorylation of 1,6-anhydro-N-acetylmuramic acid (anhMurNAc) with the simultaneous cleavage of the 1,6-anhydro ring, generating MurNAc-6-P. Is required for the utilization of anhMurNAc either imported from the medium or derived from its own cell wall murein, and thus plays a role in cell wall recycling. The polypeptide is Anhydro-N-acetylmuramic acid kinase (Paraburkholderia xenovorans (strain LB400)).